The sequence spans 362 residues: E3 ubiquitin-protein ligase TM129 (362 aa).

Residues 1–6 (MESPEV) lie on the Lumenal side of the membrane. The helical transmembrane segment at 7–27 (TFTLAYVVFSVCFVFTPNEFH) threads the bilayer. The Cytoplasmic segment spans residues 28–56 (SAGITVQNLLSGWLGSEDVAFVHYHIRRS). A helical transmembrane segment spans residues 57–77 (TATLLTHSLLPMGYFIGMCFA). Residues 78–94 (APEKELYNVYKAADGWK) are Lumenal-facing. The chain crosses the membrane as a helical span at residues 95–115 (VFVLITVLLPVTTSILAFYWS). The Cytoplasmic portion of the chain corresponds to 116 to 362 (QKRWGNHPLA…FCIVDVCIVR (247 aa)). The RING-type; degenerate zinc-finger motif lies at 285-350 (CIGCMQTNAN…SSHVPCPTCR (66 aa)).

The protein belongs to the TMEM129 family. As to quaternary structure, integral component of ER-resident dislocation complexes.

It is found in the endoplasmic reticulum membrane. The catalysed reaction is S-ubiquitinyl-[E2 ubiquitin-conjugating enzyme]-L-cysteine + [acceptor protein]-L-lysine = [E2 ubiquitin-conjugating enzyme]-L-cysteine + N(6)-ubiquitinyl-[acceptor protein]-L-lysine.. It participates in protein modification; protein ubiquitination. In terms of biological role, E3 ubiquitin-protein ligase involved in ER-associated protein degradation, preferentially associates with the E2 enzyme UBE2J2. In Xenopus tropicalis (Western clawed frog), this protein is E3 ubiquitin-protein ligase TM129 (tmem129).